The chain runs to 368 residues: 3-dehydroquinate synthase (368 aa).

NAD(+) is bound by residues 69-74 (DGEAYK), 103-107 (GVIGD), 127-128 (TT), Lys140, and Lys149. Positions 182, 245, and 262 each coordinate Zn(2+).

The protein belongs to the sugar phosphate cyclases superfamily. Dehydroquinate synthase family. The cofactor is Co(2+). Zn(2+) is required as a cofactor. NAD(+) serves as cofactor.

Its subcellular location is the cytoplasm. The enzyme catalyses 7-phospho-2-dehydro-3-deoxy-D-arabino-heptonate = 3-dehydroquinate + phosphate. It functions in the pathway metabolic intermediate biosynthesis; chorismate biosynthesis; chorismate from D-erythrose 4-phosphate and phosphoenolpyruvate: step 2/7. Functionally, catalyzes the conversion of 3-deoxy-D-arabino-heptulosonate 7-phosphate (DAHP) to dehydroquinate (DHQ). This chain is 3-dehydroquinate synthase, found in Pseudomonas aeruginosa (strain UCBPP-PA14).